Reading from the N-terminus, the 206-residue chain is Lipid A acyltransferase PagP (206 aa).

Positions Met1–Ala22 are cleaved as a signal peptide. Residues Val26–Ala46 are compositionally biased toward low complexity. The disordered stretch occupies residues Val26–Ala50. Catalysis depends on residues His80, Asp123, and Ser124.

It belongs to the lipid A palmitoyltransferase family. Homodimer.

It localises to the cell outer membrane. It catalyses the reaction a lipid A + a 1,2-diacyl-sn-glycero-3-phosphocholine = a hepta-acyl lipid A + a 2-acyl-sn-glycero-3-phosphocholine. The enzyme catalyses a lipid IVA + a 1,2-diacyl-sn-glycero-3-phosphocholine = a lipid IVB + a 2-acyl-sn-glycero-3-phosphocholine. It carries out the reaction a lipid IIA + a 1,2-diacyl-sn-glycero-3-phosphocholine = a lipid IIB + a 2-acyl-sn-glycero-3-phosphocholine. Functionally, transfers a fatty acid residue from the sn-1 position of a phospholipid to the N-linked hydroxyfatty acid chain on the proximal unit of lipid A or its precursors. The protein is Lipid A acyltransferase PagP of Laribacter hongkongensis (strain HLHK9).